The chain runs to 699 residues: Protein STRUBBELIG-RECEPTOR FAMILY 5 (699 aa).

Positions 1–22 (MTQKLVRLVIVSLAITVTLLQA) are cleaved as a signal peptide. Over 23–273 (KTDNQEVSAL…DGGGITAGTG (251 aa)) the chain is Extracellular. LRR repeat units follow at residues 93–115 (SLTTFDLSKNNLKGNIPYQLPPN), 116–136 (IANLDFSENELDGNVPYSLSQ), 139–161 (NLQSINLGQNKLNGELPDMFQKL), 163–186 (KLETLDFSLNKLSGKLPQSFANLT), and 187–209 (SLKKLHLQDNRFTGDINVLRNLA). N-linked (GlcNAc...) asparagine glycosylation occurs at Asn184. The tract at residues 239–263 (NDWSTETAPPPPPGVKYGRKSSGSK) is disordered. A helical membrane pass occupies residues 274 to 294 (MVIAGACLGVLVLIIVLIALV). The Cytoplasmic segment spans residues 295-699 (SKKKSSLSPH…SYRAHDDYDY (405 aa)). Position 368 is a phosphoserine (Ser368). In terms of domain architecture, Protein kinase spans 404 to 675 (FSPGNLLGEG…SEVVEALVRM (272 aa)). ATP-binding positions include 410-418 (LGEGSIGRV) and Lys432.

Belongs to the protein kinase superfamily. Ser/Thr protein kinase family. In terms of tissue distribution, expressed in leaves and flowers.

The protein localises to the membrane. The protein is Protein STRUBBELIG-RECEPTOR FAMILY 5 (SRF5) of Arabidopsis thaliana (Mouse-ear cress).